Consider the following 182-residue polypeptide: Large ribosomal subunit protein uL22 (182 aa).

Residues 159–182 (AAAKPKATAKKATGEKSKAKTKAN) are disordered.

Belongs to the universal ribosomal protein uL22 family. As to quaternary structure, part of the 50S ribosomal subunit.

In terms of biological role, this protein binds specifically to 23S rRNA; its binding is stimulated by other ribosomal proteins, e.g. L4, L17, and L20. It is important during the early stages of 50S assembly. It makes multiple contacts with different domains of the 23S rRNA in the assembled 50S subunit and ribosome. Functionally, the globular domain of the protein is located near the polypeptide exit tunnel on the outside of the subunit, while an extended beta-hairpin is found that lines the wall of the exit tunnel in the center of the 70S ribosome. This Cytophaga hutchinsonii (strain ATCC 33406 / DSM 1761 / CIP 103989 / NBRC 15051 / NCIMB 9469 / D465) protein is Large ribosomal subunit protein uL22.